A 635-amino-acid polypeptide reads, in one-letter code: Extracellular metalloproteinase 1 (635 aa).

The N-terminal stretch at 1–19 (MHGLLLAAGLLSLPLHVLA) is a signal peptide. Positions 20-246 (HPQPSTSTSL…VHNVVDYVAH (227 aa)) are excised as a propeptide. N-linked (GlcNAc...) asparagine glycosylation occurs at asparagine 287. Residue histidine 430 coordinates Zn(2+). Residue glutamate 431 is part of the active site. Position 434 (histidine 434) interacts with Zn(2+). Asparagine 475, asparagine 594, and asparagine 623 each carry an N-linked (GlcNAc...) asparagine glycan.

The protein belongs to the peptidase M36 family. Zn(2+) serves as cofactor.

The protein resides in the secreted. In terms of biological role, secreted metalloproteinase probably acting as a virulence factor. The sequence is that of Extracellular metalloproteinase 1 (MEP1) from Trichophyton rubrum (Athlete's foot fungus).